The following is a 421-amino-acid chain: SH2 domain-containing protein 4A (421 aa).

Phosphoserine occurs at positions 117 and 123. The tract at residues 132–271 (DLQAMKKTEP…FLQPLGIPPK (140 aa)) is disordered. Composition is skewed to basic and acidic residues over residues 163-201 (TRKD…KEDS) and 211-230 (KAAD…DYKR). Serine 232 is subject to Phosphoserine. Positions 315-407 (WFHGILTLKK…LGKELLLYPC (93 aa)) constitute an SH2 domain.

As to quaternary structure, interacts with ESR1. As to expression, in the kidney, expressed only in the glomerulus. Expressed in T-cells, B-cells, macrophages and dendritic cells (at protein level). In adult, highest levels are found in muscle and lung with lower levels in kidney.

The protein localises to the cytoplasm. Functionally, inhibits estrogen-induced cell proliferation by competing with PLCG for binding to ESR1, blocking the effect of estrogen on PLCG and repressing estrogen-induced proliferation. May play a role in T-cell development and function. This is SH2 domain-containing protein 4A (Sh2d4a) from Mus musculus (Mouse).